A 718-amino-acid polypeptide reads, in one-letter code: Polyribonucleotide nucleotidyltransferase (718 aa).

Residues Asp-493 and Asp-499 each coordinate Mg(2+). Residues 560-619 enclose the KH domain; it reads PRMITIKINPEKIRDVIGKGGSVIRALTEETGTTIDISDDGVVTIASTSSEGMAEAKKRI. Residues 629–697 form the S1 motif domain; that stretch reads GQVYEGTVLK…EKGRVRLSAK (69 aa).

It belongs to the polyribonucleotide nucleotidyltransferase family. Requires Mg(2+) as cofactor.

The protein resides in the cytoplasm. It catalyses the reaction RNA(n+1) + phosphate = RNA(n) + a ribonucleoside 5'-diphosphate. Its function is as follows. Involved in mRNA degradation. Catalyzes the phosphorolysis of single-stranded polyribonucleotides processively in the 3'- to 5'-direction. This chain is Polyribonucleotide nucleotidyltransferase, found in Paraburkholderia phytofirmans (strain DSM 17436 / LMG 22146 / PsJN) (Burkholderia phytofirmans).